Reading from the N-terminus, the 238-residue chain is Adenylate dimethylallyltransferase (238 aa).

This sequence belongs to the isopentenyl transferase family.

The catalysed reaction is dimethylallyl diphosphate + AMP = N(6)-(dimethylallyl)adenosine 5'-phosphate + diphosphate. Its function is as follows. Transfers dimethylallyl groups to AMP as part of the biosynthesis of cytokinin phytohormones. In Ralstonia nicotianae (strain ATCC BAA-1114 / GMI1000) (Ralstonia solanacearum), this protein is Adenylate dimethylallyltransferase (tzs).